We begin with the raw amino-acid sequence, 624 residues long: UvrABC system protein C (624 aa).

In terms of domain architecture, GIY-YIG spans 25-104 (AEPGVYFMRD…IKQHQPHFNV (80 aa)). A UVR domain is found at 214 to 249 (SELIDTLTPQMEAAAENLNFEQAARIRDQINGLKTL).

Belongs to the UvrC family. As to quaternary structure, interacts with UvrB in an incision complex.

The protein resides in the cytoplasm. The UvrABC repair system catalyzes the recognition and processing of DNA lesions. UvrC both incises the 5' and 3' sides of the lesion. The N-terminal half is responsible for the 3' incision and the C-terminal half is responsible for the 5' incision. The polypeptide is UvrABC system protein C (Cyanothece sp. (strain PCC 7425 / ATCC 29141)).